The chain runs to 375 residues: Naringenin 7-O-methyltransferase (375 aa).

136 to 142 is a binding site for substrate; it reads LNLDKVF. Residues 168-188 form a substrate binding region; sequence LFQYLGQDGNEPSNTLFNQAM. S-adenosyl-L-methionine-binding residues include Gly-219, Asp-242, Met-263, and Lys-276. Residue His-280 is the Proton acceptor of the active site.

Belongs to the class I-like SAM-binding methyltransferase superfamily. Cation-independent O-methyltransferase family. COMT subfamily.

The catalysed reaction is (2S)-naringenin + S-adenosyl-L-methionine = (2S)-sakuranetin + S-adenosyl-L-homocysteine + H(+). Functionally, S-adenosyl-L-methionine-dependent methyltransferase involved in the biosynthesis of the sakuranetin, an inducible defense mechanism of O.sativa against pathogen attack. The polypeptide is Naringenin 7-O-methyltransferase (Oryza sativa subsp. japonica (Rice)).